The primary structure comprises 792 residues: 5-methyltetrahydropteroyltriglutamate--homocysteine methyltransferase (792 aa).

Residues 16 to 19 (RELK) and Lys112 each bind 5-methyltetrahydropteroyltri-L-glutamate. L-homocysteine contacts are provided by residues 432–434 (IGS) and Glu485. L-methionine-binding positions include 432–434 (IGS) and Glu485. 5-methyltetrahydropteroyltri-L-glutamate-binding positions include 516-517 (RC) and Trp562. Asp600 provides a ligand contact to L-homocysteine. Asp600 serves as a coordination point for L-methionine. Residue Glu606 participates in 5-methyltetrahydropteroyltri-L-glutamate binding. Zn(2+)-binding residues include His642, Cys644, and Glu666. The active-site Proton donor is His695. Cys727 contacts Zn(2+).

The protein belongs to the vitamin-B12 independent methionine synthase family. Zn(2+) serves as cofactor.

It catalyses the reaction 5-methyltetrahydropteroyltri-L-glutamate + L-homocysteine = tetrahydropteroyltri-L-glutamate + L-methionine. The protein operates within amino-acid biosynthesis; L-methionine biosynthesis via de novo pathway; L-methionine from L-homocysteine (MetE route): step 1/1. Its function is as follows. Catalyzes the transfer of a methyl group from 5-methyltetrahydrofolate to homocysteine resulting in methionine formation. The sequence is that of 5-methyltetrahydropteroyltriglutamate--homocysteine methyltransferase from Cupriavidus necator (Alcaligenes eutrophus).